The chain runs to 525 residues: GMP synthase [glutamine-hydrolyzing] (525 aa).

Positions 9–207 (RILILDFGSQ…VQDICGCEAL (199 aa)) constitute a Glutamine amidotransferase type-1 domain. Catalysis depends on Cys86, which acts as the Nucleophile. Residues His181 and Glu183 contribute to the active site. Residues 208–400 (WTASNIVEDA…LGLPYDMVYR (193 aa)) form the GMPS ATP-PPase domain. Residue 235 to 241 (SGGVDSS) participates in ATP binding.

Homodimer.

The enzyme catalyses XMP + L-glutamine + ATP + H2O = GMP + L-glutamate + AMP + diphosphate + 2 H(+). It participates in purine metabolism; GMP biosynthesis; GMP from XMP (L-Gln route): step 1/1. In terms of biological role, catalyzes the synthesis of GMP from XMP. This is GMP synthase [glutamine-hydrolyzing] from Pseudomonas putida (strain GB-1).